A 233-amino-acid chain; its full sequence is Nucleoside diphosphate kinase 2, chloroplastic (233 aa).

The transit peptide at 1-67 (MEAMSGLSSP…LISHSLPRKK (67 aa)) directs the protein to the chloroplast. Residues Lys-93, Phe-141, Arg-169, Thr-175, Arg-186, and Asn-196 each contribute to the ATP site. His-199 serves as the catalytic Pros-phosphohistidine intermediate.

It belongs to the NDK family. Requires Mg(2+) as cofactor.

It is found in the plastid. The protein resides in the chloroplast. It catalyses the reaction a 2'-deoxyribonucleoside 5'-diphosphate + ATP = a 2'-deoxyribonucleoside 5'-triphosphate + ADP. The catalysed reaction is a ribonucleoside 5'-diphosphate + ATP = a ribonucleoside 5'-triphosphate + ADP. Functionally, major role in the synthesis of nucleoside triphosphates other than ATP. The ATP gamma phosphate is transferred to the NDP beta phosphate via a ping-pong mechanism, using a phosphorylated active-site intermediate. The protein is Nucleoside diphosphate kinase 2, chloroplastic (NDPK2) of Spinacia oleracea (Spinach).